The primary structure comprises 206 residues: Protein-methionine-sulfoxide reductase heme-binding subunit MsrQ (206 aa).

4 helical membrane-spanning segments follow: residues 8–28 (IVWL…WLVW), 82–102 (LWCF…ELGI), 116–136 (PYLT…LTST), and 153–173 (FVYL…KILS).

It belongs to the MsrQ family. Heterodimer of a catalytic subunit (MsrP) and a heme-binding subunit (MsrQ). Requires FMN as cofactor. It depends on heme b as a cofactor.

Its subcellular location is the cell inner membrane. In terms of biological role, part of the MsrPQ system that repairs oxidized periplasmic proteins containing methionine sulfoxide residues (Met-O), using respiratory chain electrons. Thus protects these proteins from oxidative-stress damage caused by reactive species of oxygen and chlorine generated by the host defense mechanisms. MsrPQ is essential for the maintenance of envelope integrity under bleach stress, rescuing a wide series of structurally unrelated periplasmic proteins from methionine oxidation. MsrQ provides electrons for reduction to the reductase catalytic subunit MsrP, using the quinone pool of the respiratory chain. The sequence is that of Protein-methionine-sulfoxide reductase heme-binding subunit MsrQ from Citrobacter koseri (strain ATCC BAA-895 / CDC 4225-83 / SGSC4696).